The chain runs to 335 residues: Deoxyhypusine hydroxylase (335 aa).

HEAT-like PBS-type repeat units lie at residues 71–97 (LKHE…VVKD), 104–130 (CRHE…LRDN), 200–233 (QRYR…GLKD), 238–264 (FRHE…ALSD), and 271–298 (VRHE…FLND). 4 residues coordinate Fe cation: His-73, Glu-74, His-106, and Glu-107. Residues His-240, Glu-241, His-273, and Glu-274 each coordinate Fe cation.

It belongs to the deoxyhypusine hydroxylase family. Fe(2+) serves as cofactor.

It localises to the cytoplasm. The protein localises to the nucleus. It catalyses the reaction [eIF5A protein]-deoxyhypusine + AH2 + O2 = [eIF5A protein]-hypusine + A + H2O. It functions in the pathway protein modification; eIF5A hypusination. Catalyzes the hydroxylation of the N(6)-(4-aminobutyl)-L-lysine intermediate to form hypusine, an essential post-translational modification only found in mature eIF-5A factor. In Aspergillus clavatus (strain ATCC 1007 / CBS 513.65 / DSM 816 / NCTC 3887 / NRRL 1 / QM 1276 / 107), this protein is Deoxyhypusine hydroxylase (lia1).